Consider the following 314-residue polypeptide: Putative S-adenosyl-L-methionine-dependent methyltransferase MRA_3805 (314 aa).

S-adenosyl-L-methionine is bound by residues Asp-132 and 161 to 162 (DL).

This sequence belongs to the UPF0677 family.

Its function is as follows. Exhibits S-adenosyl-L-methionine-dependent methyltransferase activity. The chain is Putative S-adenosyl-L-methionine-dependent methyltransferase MRA_3805 from Mycobacterium tuberculosis (strain ATCC 25177 / H37Ra).